Reading from the N-terminus, the 360-residue chain is Phospho-N-acetylmuramoyl-pentapeptide-transferase (360 aa).

10 helical membrane passes run 26–46, 70–90, 97–117, 134–154, 167–187, 199–219, 236–256, 263–283, 288–308, and 338–358; these read AILG…WVIN, GTPT…TLLW, YVLA…VDDY, YFWQ…TAQI, GVAL…VVGF, GLAI…AYLV, AGEL…FLWF, VFMG…IAVI, IVFI…ILQV, and VIVR…ATLK.

This sequence belongs to the glycosyltransferase 4 family. MraY subfamily. Mg(2+) serves as cofactor.

It localises to the cell inner membrane. It carries out the reaction UDP-N-acetyl-alpha-D-muramoyl-L-alanyl-gamma-D-glutamyl-meso-2,6-diaminopimeloyl-D-alanyl-D-alanine + di-trans,octa-cis-undecaprenyl phosphate = di-trans,octa-cis-undecaprenyl diphospho-N-acetyl-alpha-D-muramoyl-L-alanyl-D-glutamyl-meso-2,6-diaminopimeloyl-D-alanyl-D-alanine + UMP. The protein operates within cell wall biogenesis; peptidoglycan biosynthesis. Functionally, catalyzes the initial step of the lipid cycle reactions in the biosynthesis of the cell wall peptidoglycan: transfers peptidoglycan precursor phospho-MurNAc-pentapeptide from UDP-MurNAc-pentapeptide onto the lipid carrier undecaprenyl phosphate, yielding undecaprenyl-pyrophosphoryl-MurNAc-pentapeptide, known as lipid I. In Saccharophagus degradans (strain 2-40 / ATCC 43961 / DSM 17024), this protein is Phospho-N-acetylmuramoyl-pentapeptide-transferase.